The chain runs to 215 residues: Ribosomal RNA small subunit methyltransferase G (215 aa).

S-adenosyl-L-methionine is bound by residues Gly71, Leu76, and Arg135.

It belongs to the methyltransferase superfamily. RNA methyltransferase RsmG family.

The protein localises to the cytoplasm. Functionally, specifically methylates the N7 position of a guanine in 16S rRNA. This chain is Ribosomal RNA small subunit methyltransferase G, found in Salinibacter ruber (strain DSM 13855 / M31).